Here is a 113-residue protein sequence, read N- to C-terminus: uncharacterized protein (113 aa).

The protein resides in the mitochondrion. This is an uncharacterized protein from Arabidopsis thaliana (Mouse-ear cress).